Here is a 434-residue protein sequence, read N- to C-terminus: Histidinol dehydrogenase (434 aa).

Tyr130, Gln188, and Asn211 together coordinate NAD(+). Residues Ser237, Gln259, and His262 each contribute to the substrate site. Residues Gln259 and His262 each coordinate Zn(2+). Active-site proton acceptor residues include Glu326 and His327. Residues His327, Asp360, Glu414, and His419 each contribute to the substrate site. Residue Asp360 participates in Zn(2+) binding. His419 provides a ligand contact to Zn(2+).

The protein belongs to the histidinol dehydrogenase family. In terms of assembly, homodimer. Requires Zn(2+) as cofactor.

The catalysed reaction is L-histidinol + 2 NAD(+) + H2O = L-histidine + 2 NADH + 3 H(+). Its pathway is amino-acid biosynthesis; L-histidine biosynthesis; L-histidine from 5-phospho-alpha-D-ribose 1-diphosphate: step 9/9. Its function is as follows. Catalyzes the sequential NAD-dependent oxidations of L-histidinol to L-histidinaldehyde and then to L-histidine. This chain is Histidinol dehydrogenase, found in Escherichia coli O157:H7.